The sequence spans 157 residues: 1,4-dihydroxy-2-naphthoyl-CoA thioesterase 2 (157 aa).

Residue glutamate 56 is part of the active site. Residues 154 to 156 carry the Microbody targeting signal motif; it reads ISK.

It belongs to the 4-hydroxybenzoyl-CoA thioesterase family. DHNA-CoA hydrolase subfamily. In terms of assembly, homotetramers.

The protein resides in the peroxisome. Its pathway is cofactor biosynthesis; phylloquinone biosynthesis. The protein operates within quinol/quinone metabolism; 1,4-dihydroxy-2-naphthoate biosynthesis; 1,4-dihydroxy-2-naphthoate from chorismate: step 7/7. Catalyzes the hydrolysis of the thioester bond of 1,4-dihydroxy-2-naphthoyl-CoA (DHNA-CoA) in peroxisomes, a necessary step to form the naphthoquinone ring of phylloquinone (vitamin K(1)). Displayed also slight thioesterase activity towards benzoyl-CoA. Is not active on phenylacetyl-CoA, succinyl-CoA and palmitoyl-CoA thioesters. This is 1,4-dihydroxy-2-naphthoyl-CoA thioesterase 2 from Arabidopsis thaliana (Mouse-ear cress).